We begin with the raw amino-acid sequence, 274 residues long: Anamorsin homolog (274 aa).

The segment at 1-154 (MDRTRKQCSV…KKPSWKIGSS (154 aa)) is N-terminal SAM-like domain. Positions 154–185 (SFALKKSTKGSVKVNLDDDLIDEDSLLTEEDM) are linker. [2Fe-2S] cluster-binding residues include C196, C205, C208, and C210. Residues 196–210 (CEVGSTRKACKNCTC) form a fe-S binding site A region. [4Fe-4S] cluster-binding residues include C235, C238, C246, and C249. 2 consecutive short sequence motifs (cx2C motif) follow at residues 235–238 (CGSC) and 246–249 (CSTC). A fe-S binding site B region spans residues 235–249 (CGSCGLGDAFRCSTC).

It belongs to the anamorsin family. As to quaternary structure, monomer. [2Fe-2S] cluster serves as cofactor. Requires [4Fe-4S] cluster as cofactor.

It is found in the cytoplasm. Its subcellular location is the mitochondrion intermembrane space. Component of the cytosolic iron-sulfur (Fe-S) protein assembly (CIA) machinery. Required for the maturation of extramitochondrial Fe-S proteins. Part of an electron transfer chain functioning in an early step of cytosolic Fe-S biogenesis, facilitating the de novo assembly of a [4Fe-4S] cluster on the cytosolic Fe-S scaffold complex. Electrons are transferred from NADPH via a FAD- and FMN-containing diflavin oxidoreductase. Together with the diflavin oxidoreductase, also required for the assembly of the diferric tyrosyl radical cofactor of ribonucleotide reductase (RNR), probably by providing electrons for reduction during radical cofactor maturation in the catalytic small subunit. The sequence is that of Anamorsin homolog from Ricinus communis (Castor bean).